Here is a 147-residue protein sequence, read N- to C-terminus: D-aminoacyl-tRNA deacylase (147 aa).

A Gly-cisPro motif, important for rejection of L-amino acids motif is present at residues 137 to 138; the sequence is GP.

Belongs to the DTD family. As to quaternary structure, homodimer.

Its subcellular location is the cytoplasm. The enzyme catalyses glycyl-tRNA(Ala) + H2O = tRNA(Ala) + glycine + H(+). It carries out the reaction a D-aminoacyl-tRNA + H2O = a tRNA + a D-alpha-amino acid + H(+). In terms of biological role, an aminoacyl-tRNA editing enzyme that deacylates mischarged D-aminoacyl-tRNAs. Also deacylates mischarged glycyl-tRNA(Ala), protecting cells against glycine mischarging by AlaRS. Acts via tRNA-based rather than protein-based catalysis; rejects L-amino acids rather than detecting D-amino acids in the active site. By recycling D-aminoacyl-tRNA to D-amino acids and free tRNA molecules, this enzyme counteracts the toxicity associated with the formation of D-aminoacyl-tRNA entities in vivo and helps enforce protein L-homochirality. This is D-aminoacyl-tRNA deacylase from Bacillus licheniformis (strain ATCC 14580 / DSM 13 / JCM 2505 / CCUG 7422 / NBRC 12200 / NCIMB 9375 / NCTC 10341 / NRRL NRS-1264 / Gibson 46).